Consider the following 40-residue polypeptide: Small polypeptide DEVIL 3 (40 aa).

The tract at residues 9 to 40 (PCNKKLGGYLKEQKGRLYIIRRCVVMLICWHD) is required for DVL/RTFL small polypeptide activity. A helical transmembrane segment spans residues 12–28 (KKLGGYLKEQKGRLYII).

Belongs to the DVL/RTFL small polypeptides family. As to expression, mostly expressed in flowers and stems, and, to a lower extent, in roots and leaves.

It localises to the cell membrane. In terms of biological role, small polypeptide acting as a regulatory molecule which coordinates cellular responses required for differentiation, growth and development, including leaves shape, pedicule elongation, inflorescence organization and fruit maturation, probably by restricting polar cell proliferation in lateral organs and coordinating socket cell recruitment and differentiation at trichome sites. This is Small polypeptide DEVIL 3 from Arabidopsis thaliana (Mouse-ear cress).